The primary structure comprises 447 residues: Na(+)-translocating NADH-quinone reductase subunit A (447 aa).

The protein belongs to the NqrA family. In terms of assembly, composed of six subunits; NqrA, NqrB, NqrC, NqrD, NqrE and NqrF.

The enzyme catalyses a ubiquinone + n Na(+)(in) + NADH + H(+) = a ubiquinol + n Na(+)(out) + NAD(+). NQR complex catalyzes the reduction of ubiquinone-1 to ubiquinol by two successive reactions, coupled with the transport of Na(+) ions from the cytoplasm to the periplasm. NqrA to NqrE are probably involved in the second step, the conversion of ubisemiquinone to ubiquinol. This chain is Na(+)-translocating NADH-quinone reductase subunit A, found in Neisseria meningitidis serogroup C / serotype 2a (strain ATCC 700532 / DSM 15464 / FAM18).